Here is a 128-residue protein sequence, read N- to C-terminus: Aspartate 1-decarboxylase (128 aa).

The active-site Schiff-base intermediate with substrate; via pyruvic acid is S25. At S25 the chain carries Pyruvic acid (Ser). Residue T57 participates in substrate binding. Catalysis depends on Y58, which acts as the Proton donor. Substrate is bound at residue 73 to 75; it reads GAA.

It belongs to the PanD family. As to quaternary structure, heterooctamer of four alpha and four beta subunits. Requires pyruvate as cofactor. Post-translationally, is synthesized initially as an inactive proenzyme, which is activated by self-cleavage at a specific serine bond to produce a beta-subunit with a hydroxyl group at its C-terminus and an alpha-subunit with a pyruvoyl group at its N-terminus.

Its subcellular location is the cytoplasm. It carries out the reaction L-aspartate + H(+) = beta-alanine + CO2. It participates in cofactor biosynthesis; (R)-pantothenate biosynthesis; beta-alanine from L-aspartate: step 1/1. Functionally, catalyzes the pyruvoyl-dependent decarboxylation of aspartate to produce beta-alanine. This Caldicellulosiruptor saccharolyticus (strain ATCC 43494 / DSM 8903 / Tp8T 6331) protein is Aspartate 1-decarboxylase.